A 356-amino-acid polypeptide reads, in one-letter code: Phosphoribosyl pyrophosphate synthase-associated protein 1 (356 aa).

Position 1 is an N-acetylmethionine (M1). 2 positions are modified to phosphoserine: S177 and S215.

Belongs to the ribose-phosphate pyrophosphokinase family. In terms of assembly, binds to PRPS1 and PRPS2. As to expression, ubiquitous.

Its function is as follows. Seems to play a negative regulatory role in 5-phosphoribose 1-diphosphate synthesis. This Rattus norvegicus (Rat) protein is Phosphoribosyl pyrophosphate synthase-associated protein 1 (Prpsap1).